The following is a 79-amino-acid chain: Ferredoxin oxidoreductase 1 subunit ForD (79 aa).

2 consecutive 4Fe-4S ferredoxin-type domains span residues 3–35 (YVAQ…YTDE) and 37–65 (HHAY…RDSI). 8 residues coordinate [4Fe-4S] cluster: C12, C17, C20, C24, C46, C49, C52, and C56.

As to quaternary structure, heterotetramer of one alpha, one beta, one delta and one gamma chain. [4Fe-4S] cluster is required as a cofactor.

The protein is Ferredoxin oxidoreductase 1 subunit ForD (forD1) of Aquifex aeolicus (strain VF5).